We begin with the raw amino-acid sequence, 926 residues long: Eukaryotic translation initiation factor 3 subunit C (926 aa).

3 disordered regions span residues 1-27, 157-251, and 266-300; these read MSRF…PKAA, ASYK…NDGT, and EKAS…EEGG. Residues 200 to 210 show a composition bias toward basic and acidic residues; the sequence is KPQEEEKKAPE. The span at 220 to 235 shows a compositional bias: acidic residues; sequence DEESESDDDEDSEDWA. A compositionally biased stretch (basic residues) spans 274–283; it reads DDRRRRHKKK. The segment covering 287-299 has biased composition (acidic residues); that stretch reads EEEAEEEGEAEEG. In terms of domain architecture, PCI spans 672-848; that stretch reads FHMHINLELL…QTVVMHRTEP (177 aa). The segment covering 890–919 has biased composition (low complexity); the sequence is GGYQQKQGYQRGDQKGGYQQKQNYQRGGYR. Residues 890 to 926 are disordered; it reads GGYQQKQGYQRGDQKGGYQQKQNYQRGGYRNQNQSSY.

Belongs to the eIF-3 subunit C family. Component of the eukaryotic translation initiation factor 3 (eIF-3) complex, which is composed of 13 subunits: eif3a, eif3b, eif3c, eif3d, eif3e, eif3f, eif3g, eif3h, eif3i, eif3j, eif3k, eif3l and eif3m.

The protein localises to the cytoplasm. Its function is as follows. Component of the eukaryotic translation initiation factor 3 (eIF-3) complex, which is involved in protein synthesis of a specialized repertoire of mRNAs and, together with other initiation factors, stimulates binding of mRNA and methionyl-tRNAi to the 40S ribosome. The eIF-3 complex specifically targets and initiates translation of a subset of mRNAs involved in cell proliferation. The chain is Eukaryotic translation initiation factor 3 subunit C (eif3c) from Danio rerio (Zebrafish).